We begin with the raw amino-acid sequence, 415 residues long: Heterogeneous nuclear ribonucleoprotein F (415 aa).

Methionine 1 is modified (N-acetylmethionine). Position 2 is an N-acetylmethionine; in Heterogeneous nuclear ribonucleoprotein F, N-terminally processed (methionine 2). One can recognise an RRM 1 domain in the interval valine 13 to valine 85. Residue lysine 72 forms a Glycyl lysine isopeptide (Lys-Gly) (interchain with G-Cter in SUMO) linkage. The tract at residues arginine 81–phenylalanine 86 is interaction with RNA. A Glycyl lysine isopeptide (Lys-Gly) (interchain with G-Cter in SUMO2) cross-link involves residue lysine 87. A phosphoserine mark is found at serine 104, serine 107, and serine 161. An RRM 2 domain is found at glycine 111–glutamine 188. Residue lysine 167 forms a Glycyl lysine isopeptide (Lys-Gly) (interchain with G-Cter in SUMO2) linkage. The interval arginine 179 to phenylalanine 184 is interaction with RNA. Lysine 185 is covalently cross-linked (Glycyl lysine isopeptide (Lys-Gly) (interchain with G-Cter in SUMO2)). Serine 187, serine 193, and serine 195 each carry phosphoserine. Lysine 200 is modified (N6-acetyllysine; alternate). A Glycyl lysine isopeptide (Lys-Gly) (interchain with G-Cter in SUMO2); alternate cross-link involves residue lysine 200. Threonine 215 carries the phosphothreonine modification. Position 224 is an N6-acetyllysine; alternate (lysine 224). A Glycyl lysine isopeptide (Lys-Gly) (interchain with G-Cter in SUMO2); alternate cross-link involves residue lysine 224. Serine 265 is subject to Phosphoserine. Positions histidine 289–glycine 366 constitute an RRM 3 domain. The interaction with RNA stretch occupies residues arginine 355–phenylalanine 360.

As to quaternary structure, identified in the spliceosome C complex. Interacts with AGO1, AGO2, TBP and TXNL4/DIM1. Sumoylated.

It is found in the nucleus. Its subcellular location is the nucleoplasm. Its function is as follows. Component of the heterogeneous nuclear ribonucleoprotein (hnRNP) complexes which provide the substrate for the processing events that pre-mRNAs undergo before becoming functional, translatable mRNAs in the cytoplasm. Plays a role in the regulation of alternative splicing events. Binds G-rich sequences in pre-mRNAs and keeps target RNA in an unfolded state. This chain is Heterogeneous nuclear ribonucleoprotein F (HNRNPF), found in Macaca fascicularis (Crab-eating macaque).